Here is a 246-residue protein sequence, read N- to C-terminus: MSKLTKEASAFFQKNQENTTKEFLKKEFAMDVFSVSLSDIEKEQIENLVVSQNSKFDEEYNRGLASIKLLTGQIKSIQKQHVLLIGEKIYKVREILKNMNSPDTTFSSWINLVFRTKSSAYNALGYYELFISLPDKNTKSLFQSIPYKTAYLLASRKGSVKDKLKVLGKISGLSNALAIDVLNKFLPPLKSSQTERCVDFEEKNKEVSEKLIDILKIVSSGLELSEYNKNLLHQLFEKTLKVDIRC.

It belongs to the UPF0137 (pGP6-D) family.

This chain is Virulence plasmid protein pGP6-D, found in Chlamydia psittaci (Chlamydophila psittaci).